A 289-amino-acid chain; its full sequence is Acetyl-coenzyme A carboxylase carboxyl transferase subunit beta (289 aa).

Residues 24-289 form the CoA carboxyltransferase N-terminal domain; the sequence is LWTNCESCGQ…RQKTVSDAAA (266 aa). Cys28, Cys31, Cys47, and Cys50 together coordinate Zn(2+). Residues 28 to 50 form a C4-type zinc finger; sequence CESCGQMMLTKELERSEKVCPHC.

This sequence belongs to the AccD/PCCB family. In terms of assembly, acetyl-CoA carboxylase is a heterohexamer composed of biotin carboxyl carrier protein (AccB), biotin carboxylase (AccC) and two subunits each of ACCase subunit alpha (AccA) and ACCase subunit beta (AccD). Zn(2+) serves as cofactor.

Its subcellular location is the cytoplasm. It catalyses the reaction N(6)-carboxybiotinyl-L-lysyl-[protein] + acetyl-CoA = N(6)-biotinyl-L-lysyl-[protein] + malonyl-CoA. Its pathway is lipid metabolism; malonyl-CoA biosynthesis; malonyl-CoA from acetyl-CoA: step 1/1. Its function is as follows. Component of the acetyl coenzyme A carboxylase (ACC) complex. Biotin carboxylase (BC) catalyzes the carboxylation of biotin on its carrier protein (BCCP) and then the CO(2) group is transferred by the transcarboxylase to acetyl-CoA to form malonyl-CoA. This chain is Acetyl-coenzyme A carboxylase carboxyl transferase subunit beta, found in Gluconobacter oxydans (strain 621H) (Gluconobacter suboxydans).